The following is a 385-amino-acid chain: tRNA-specific 2-thiouridylase MnmA (385 aa).

ATP contacts are provided by residues 27–34 (AMSGGVDS) and Leu-53. Cys-121 serves as the catalytic Nucleophile. Cys-121 and Cys-217 are disulfide-bonded. Gly-145 is an ATP binding site. The tract at residues 167 to 169 (KDQ) is interaction with tRNA. The active-site Cysteine persulfide intermediate is the Cys-217.

Belongs to the MnmA/TRMU family.

The protein localises to the cytoplasm. It catalyses the reaction S-sulfanyl-L-cysteinyl-[protein] + uridine(34) in tRNA + AH2 + ATP = 2-thiouridine(34) in tRNA + L-cysteinyl-[protein] + A + AMP + diphosphate + H(+). Functionally, catalyzes the 2-thiolation of uridine at the wobble position (U34) of tRNA, leading to the formation of s(2)U34. The protein is tRNA-specific 2-thiouridylase MnmA of Sorangium cellulosum (strain So ce56) (Polyangium cellulosum (strain So ce56)).